The sequence spans 173 residues: MTYFMFFLGLCFVLGGLAVASNPSPYYGVVGLVLASVAGCGWLLSLGISFVSLVLFMVYLGGMLVVFVYSVSLAADPFPEAWGDWRVIGYGAGFVGVLMVGMVIGGFVECWDFGVVTVDSVGMFSVRLDFGGVAMFYSCGVGMFLVAGWGLLLTLFVVLELVRGLTRGAIRAV.

The next 5 membrane-spanning stretches (helical) occupy residues 1 to 21, 27 to 47, 48 to 68, 87 to 107, and 139 to 159; these read MTYF…AVAS, YGVV…LSLG, ISFV…VVFV, VIGY…IGGF, and CGVG…FVVL.

It belongs to the complex I subunit 6 family.

The protein resides in the mitochondrion membrane. The enzyme catalyses a ubiquinone + NADH + 5 H(+)(in) = a ubiquinol + NAD(+) + 4 H(+)(out). In terms of biological role, core subunit of the mitochondrial membrane respiratory chain NADH dehydrogenase (Complex I) that is believed to belong to the minimal assembly required for catalysis. Complex I functions in the transfer of electrons from NADH to the respiratory chain. The immediate electron acceptor for the enzyme is believed to be ubiquinone. This chain is NADH-ubiquinone oxidoreductase chain 6 (MT-ND6), found in Alca torda (Razorbill).